Consider the following 267-residue polypeptide: 4-hydroxy-tetrahydrodipicolinate reductase (267 aa).

NAD(+) is bound by residues 8–13 and Glu-34; that span reads GAAGRM. Arg-35 contacts NADP(+). NAD(+) is bound by residues 98–100 and 122–125; these read GST and APNM. His-155 functions as the Proton donor/acceptor in the catalytic mechanism. A (S)-2,3,4,5-tetrahydrodipicolinate-binding site is contributed by His-156. Lys-159 serves as the catalytic Proton donor. Residue 165–166 coordinates (S)-2,3,4,5-tetrahydrodipicolinate; that stretch reads GT.

Belongs to the DapB family.

The protein localises to the cytoplasm. It carries out the reaction (S)-2,3,4,5-tetrahydrodipicolinate + NAD(+) + H2O = (2S,4S)-4-hydroxy-2,3,4,5-tetrahydrodipicolinate + NADH + H(+). The catalysed reaction is (S)-2,3,4,5-tetrahydrodipicolinate + NADP(+) + H2O = (2S,4S)-4-hydroxy-2,3,4,5-tetrahydrodipicolinate + NADPH + H(+). Its pathway is amino-acid biosynthesis; L-lysine biosynthesis via DAP pathway; (S)-tetrahydrodipicolinate from L-aspartate: step 4/4. Catalyzes the conversion of 4-hydroxy-tetrahydrodipicolinate (HTPA) to tetrahydrodipicolinate. The sequence is that of 4-hydroxy-tetrahydrodipicolinate reductase from Geotalea uraniireducens (strain Rf4) (Geobacter uraniireducens).